Here is a 286-residue protein sequence, read N- to C-terminus: Bifunctional protein FolD (286 aa).

NADP(+)-binding positions include 165-167, Ser190, and Val231; that span reads GRS.

The protein belongs to the tetrahydrofolate dehydrogenase/cyclohydrolase family. As to quaternary structure, homodimer.

The catalysed reaction is (6R)-5,10-methylene-5,6,7,8-tetrahydrofolate + NADP(+) = (6R)-5,10-methenyltetrahydrofolate + NADPH. The enzyme catalyses (6R)-5,10-methenyltetrahydrofolate + H2O = (6R)-10-formyltetrahydrofolate + H(+). It participates in one-carbon metabolism; tetrahydrofolate interconversion. Catalyzes the oxidation of 5,10-methylenetetrahydrofolate to 5,10-methenyltetrahydrofolate and then the hydrolysis of 5,10-methenyltetrahydrofolate to 10-formyltetrahydrofolate. The sequence is that of Bifunctional protein FolD from Bacillus cereus (strain ATCC 10987 / NRS 248).